A 202-amino-acid chain; its full sequence is UPF0637 protein Exig_2520 (202 aa).

This sequence belongs to the UPF0637 family.

In Exiguobacterium sibiricum (strain DSM 17290 / CCUG 55495 / CIP 109462 / JCM 13490 / 255-15), this protein is UPF0637 protein Exig_2520.